Here is a 228-residue protein sequence, read N- to C-terminus: uncharacterized protein (228 aa).

Positions 90–115 (TDESEESSSANNTTTTASHTLSNSKK) are disordered. Over residues 96 to 113 (SSSANNTTTTASHTLSNS) the composition is skewed to low complexity.

It localises to the cytoplasm. The protein localises to the cell cortex. Deletion results in antifungal drug fluconazole-resistant phenotype. This is an uncharacterized protein from Saccharomyces cerevisiae (strain ATCC 204508 / S288c) (Baker's yeast).